A 537-amino-acid polypeptide reads, in one-letter code: P2Y purinoceptor 4 (537 aa).

The Extracellular portion of the chain corresponds to 1–49 (MTEDIMATSYPTFLTTPYLPMKLLMNLTNDTEDICVFDEGFKFLLLPVS). Residues N26 and N29 are each glycosylated (N-linked (GlcNAc...) asparagine). The chain crosses the membrane as a helical span at residues 50–70 (YSAVFMVGLPLNIAAMWIFIA). Residues 71 to 79 (KMRPWNPTT) lie on the Cytoplasmic side of the membrane. A helical transmembrane segment spans residues 80-100 (VYMFNLALSDTLYVLSLPTLV). Over 101–118 (YYYADKNNWPFGEVLCKL) the chain is Extracellular. C116 and C193 are disulfide-bonded. Residues 119 to 139 (VRFLFYANLYSSILFLTCISV) traverse the membrane as a helical segment. Over 140–161 (HRYRGVCHPITSLRRMNAKHAY) the chain is Cytoplasmic. A helical transmembrane segment spans residues 162 to 182 (VICALVWLSVTLCLVPNLIFV). Over 183 to 210 (TVSPKVKNTICHDTTRPEDFARYVEYST) the chain is Extracellular. A helical transmembrane segment spans residues 211–231 (AIMCLLFGIPCLIIAGCYGLM). Residues 232–254 (TRELMKPIVSGNQQTLPSYKKRS) lie on the Cytoplasmic side of the membrane. A helical transmembrane segment spans residues 255–275 (IKTIIFVMIAFAICFMPFHIT). Residues 276–292 (RTLYYYARLLGIKCYAL) are Extracellular-facing. Residues 293 to 316 (NVINVTYKVTRPLASANSCIDPIL) traverse the membrane as a helical segment. The Cytoplasmic segment spans residues 317 to 537 (YFLANDRYRR…EKELQNFPKA (221 aa)). A disordered region spans residues 401–505 (NRRSTIKRNS…GEGTSTWNLL (105 aa)). Basic and acidic residues-rich tracts occupy residues 409–423 (NSTD…RHGE) and 431–447 (VVEK…RKTT). Over residues 448 to 465 (EQSSKTNAEQDELQTQID) the composition is skewed to polar residues.

The protein belongs to the G-protein coupled receptor 1 family.

It localises to the cell membrane. Its function is as follows. Receptor for extracellular ATP, UTP, CTP, GTP and ITP. The activity of this receptor is mediated by G proteins which activate a phosphatidylinositol-calcium second messenger system. May play a key role in the early development of neural tissue. The polypeptide is P2Y purinoceptor 4 (p2ry4) (Xenopus laevis (African clawed frog)).